A 232-amino-acid chain; its full sequence is 6-hydroxymethyl-7,8-dihydropterin pyrophosphokinase (232 aa).

Belongs to the archaeal 6-HMPDK family. The cofactor is Mg(2+).

It carries out the reaction 6-hydroxymethyl-7,8-dihydropterin + ATP = (7,8-dihydropterin-6-yl)methyl diphosphate + AMP + H(+). Its pathway is cofactor biosynthesis; 5,6,7,8-tetrahydromethanopterin biosynthesis. Its function is as follows. Catalyzes the transfer of diphosphate from ATP to 6-hydroxymethyl-7,8-dihydropterin (6-HMD), leading to 6-hydroxymethyl-7,8-dihydropterin diphosphate (6-HMDP). The protein is 6-hydroxymethyl-7,8-dihydropterin pyrophosphokinase of Methanothermobacter thermautotrophicus (strain ATCC 29096 / DSM 1053 / JCM 10044 / NBRC 100330 / Delta H) (Methanobacterium thermoautotrophicum).